Here is a 1009-residue protein sequence, read N- to C-terminus: Type VII secretion system accessory factor EsaA (1009 aa).

6 consecutive transmembrane segments (helical) span residues 7–27 (IYAL…IFFV), 822–842 (ISPT…AYIF), 869–889 (VITS…VGLI), 903–923 (KFIL…TYLL), 928–948 (SIGM…MNNL), and 979–999 (IGLA…LNMF).

It belongs to the EsaA family. In terms of assembly, homodimer. Interacts with EssB.

The protein resides in the cell membrane. Functionally, component of the type VII secretion system (Ess). Provides together with EssB and other components such as EssC and EssE a secretion platform across the cytoplasmic membrane in the host. This is Type VII secretion system accessory factor EsaA from Staphylococcus aureus (strain MSSA476).